Consider the following 184-residue polypeptide: Photosystem I assembly protein Ycf4 (184 aa).

2 consecutive transmembrane segments (helical) span residues 19-39 and 57-77; these read ISNF…LLVG and IIFF…LFIS.

Belongs to the Ycf4 family.

The protein resides in the plastid. It is found in the chloroplast thylakoid membrane. Its function is as follows. Seems to be required for the assembly of the photosystem I complex. The sequence is that of Photosystem I assembly protein Ycf4 from Drimys granadensis.